The chain runs to 638 residues: 1-deoxy-D-xylulose-5-phosphate synthase (638 aa).

Thiamine diphosphate contacts are provided by residues His79 and Ala120–Ser122. Asp151 contacts Mg(2+). Residues Gly152 to Ala153, Asn180, Tyr289, and Glu371 contribute to the thiamine diphosphate site. Asn180 serves as a coordination point for Mg(2+).

The protein belongs to the transketolase family. DXPS subfamily. Homodimer. Requires Mg(2+) as cofactor. Thiamine diphosphate is required as a cofactor.

It catalyses the reaction D-glyceraldehyde 3-phosphate + pyruvate + H(+) = 1-deoxy-D-xylulose 5-phosphate + CO2. Its pathway is metabolic intermediate biosynthesis; 1-deoxy-D-xylulose 5-phosphate biosynthesis; 1-deoxy-D-xylulose 5-phosphate from D-glyceraldehyde 3-phosphate and pyruvate: step 1/1. Its function is as follows. Catalyzes the acyloin condensation reaction between C atoms 2 and 3 of pyruvate and glyceraldehyde 3-phosphate to yield 1-deoxy-D-xylulose-5-phosphate (DXP). This chain is 1-deoxy-D-xylulose-5-phosphate synthase, found in Rhizobium leguminosarum bv. trifolii (strain WSM2304).